The sequence spans 206 residues: Large ribosomal subunit protein uL4 (206 aa).

Belongs to the universal ribosomal protein uL4 family. As to quaternary structure, part of the 50S ribosomal subunit.

One of the primary rRNA binding proteins, this protein initially binds near the 5'-end of the 23S rRNA. It is important during the early stages of 50S assembly. It makes multiple contacts with different domains of the 23S rRNA in the assembled 50S subunit and ribosome. In terms of biological role, forms part of the polypeptide exit tunnel. This Cereibacter sphaeroides (strain ATCC 17025 / ATH 2.4.3) (Rhodobacter sphaeroides) protein is Large ribosomal subunit protein uL4.